The primary structure comprises 230 residues: Cytidylate kinase (230 aa).

12–20 (GPSGAGKST) provides a ligand contact to ATP.

It belongs to the cytidylate kinase family. Type 1 subfamily.

The protein resides in the cytoplasm. The catalysed reaction is CMP + ATP = CDP + ADP. It carries out the reaction dCMP + ATP = dCDP + ADP. This chain is Cytidylate kinase, found in Corynebacterium diphtheriae (strain ATCC 700971 / NCTC 13129 / Biotype gravis).